The sequence spans 839 residues: Probable inorganic carbon transporter subunit DabA (839 aa).

4 residues coordinate Zn(2+): C353, D355, H537, and C552.

The protein belongs to the inorganic carbon transporter (TC 9.A.2) DabA family. In terms of assembly, forms a complex with DabB. Requires Zn(2+) as cofactor.

The protein localises to the cell membrane. Part of an energy-coupled inorganic carbon pump. This is Probable inorganic carbon transporter subunit DabA from Chloroflexus aggregans (strain MD-66 / DSM 9485).